A 400-amino-acid polypeptide reads, in one-letter code: Tryptophan synthase beta chain (400 aa).

Lys-90 carries the post-translational modification N6-(pyridoxal phosphate)lysine.

It belongs to the TrpB family. As to quaternary structure, tetramer of two alpha and two beta chains. The cofactor is pyridoxal 5'-phosphate.

It carries out the reaction (1S,2R)-1-C-(indol-3-yl)glycerol 3-phosphate + L-serine = D-glyceraldehyde 3-phosphate + L-tryptophan + H2O. It participates in amino-acid biosynthesis; L-tryptophan biosynthesis; L-tryptophan from chorismate: step 5/5. Its function is as follows. The beta subunit is responsible for the synthesis of L-tryptophan from indole and L-serine. The polypeptide is Tryptophan synthase beta chain (Alkaliphilus metalliredigens (strain QYMF)).